The chain runs to 371 residues: Cytochrome b (371 aa).

Helical transmembrane passes span 25–45 (FGSM…FLAV), 69–90 (WMMQ…YIHI), 105–125 (WMSG…GYVL), and 170–190 (FFAL…LHII). Positions 75 and 89 each coordinate heme b. Heme b contacts are provided by His174 and His188. Position 193 (His193) interacts with a ubiquinone. Transmembrane regions (helical) follow at residues 218–238 (HKDL…VSFF), 280–300 (LGGA…PFTH), 312–332 (LSQL…WAAT), and 339–358 (FIAI…LSIP).

Belongs to the cytochrome b family. As to quaternary structure, the cytochrome bc1 complex contains 3 respiratory subunits (MT-CYB, CYC1 and UQCRFS1), 2 core proteins (UQCRC1 and UQCRC2) and probably 6 low-molecular weight proteins. It depends on heme b as a cofactor.

Its subcellular location is the mitochondrion inner membrane. Functionally, component of the ubiquinol-cytochrome c reductase complex (complex III or cytochrome b-c1 complex) that is part of the mitochondrial respiratory chain. The b-c1 complex mediates electron transfer from ubiquinol to cytochrome c. Contributes to the generation of a proton gradient across the mitochondrial membrane that is then used for ATP synthesis. This is Cytochrome b (MT-CYB) from Liasis olivaceus (Olive python).